The following is a 112-amino-acid chain: Elongin-C (112 aa).

Belongs to the SKP1 family. As to quaternary structure, heterotrimer of an A (ELOA, ELOA2 or ELOA3P), ELOB and ELOC subunit. The elongin BC complex interacts with EPOP; leading to recruit the elongin BC complex to Polycomb group (PcG) target genes, thereby restricting excessive activity of the PRC2/EED-EZH2 complex. Component of multiple cullin-RING E3 ubiquitin-protein ligase complexes composed of Elongin BC (ELOB and ELOC), a cullin (CUL2 or CUL5), a catalytic subunit (RBX1 or RNF7/RBX2), as well as a substrate adapter protein that can be either ASB2, ASB9, ASB11, KLHDC2, KLHDC3, KLHDC10, APPBP2, FEM1A, FEM1B, FEM1C, LRR1, PCMTD1, SOCS1, SOCS2, SOCS5, SPSB1, SPSB3, ELOA, VHL, WSB1, ZYG11B or RAB40C. Interacts with TMF1. As part of the Elongin BC E3 ubiquitin ligase complex; interacts with NRBP1. May form oligomers as a KLHDC2/KLHDC3-ELOB-ELOC complex; this interaction is autoinhibitory for the E3 ligase complex as the substrate-binding site of KLHDC2/KLHDC3 is blocked in the oligomer. Post-translationally, ubiquitinated by the DCX(AMBRA1) complex, leading to its degradation by the proteasome.

The protein localises to the nucleus. The protein operates within protein modification; protein ubiquitination. Functionally, SIII, also known as elongin, is a general transcription elongation factor that increases the RNA polymerase II transcription elongation past template-encoded arresting sites. Subunit A is transcriptionally active and its transcription activity is strongly enhanced by binding to the dimeric complex of the SIII regulatory subunits B and C (elongin BC complex). In embryonic stem cells, the elongin BC complex is recruited by EPOP to Polycomb group (PcG) target genes in order generate genomic region that display both active and repressive chromatin properties, an important feature of pluripotent stem cells. Its function is as follows. Core component of multiple cullin-RING-based ECS (ElonginB/C-CUL2/5-SOCS-box protein) E3 ubiquitin-protein ligase complexes, which mediate the ubiquitination of target proteins. By binding to BC-box motifs it seems to link target recruitment subunits, like VHL and members of the SOCS box family, to Cullin/RBX1 modules that activate E2 ubiquitination enzymes. Component the von Hippel-Lindau ubiquitination complex CBC(VHL). A number of ECS complexes (containing either KLHDC2, KLHDC3, KLHDC10, APPBP2, FEM1A, FEM1B or FEM1C as substrate-recognition component) are part of the DesCEND (destruction via C-end degrons) pathway, which recognizes a C-degron located at the extreme C terminus of target proteins, leading to their ubiquitination and degradation. The ECS(ASB9) complex mediates ubiquitination and degradation of CKB. As part of a multisubunit ubiquitin ligase complex, polyubiquitinates monoubiquitinated POLR2A. ECS(LRR1) ubiquitinates MCM7 and promotes CMG replisome disassembly by VCP and chromatin extraction during S-phase. As part of the ECS(RAB40C) complex, mediates ANKRD28 ubiquitination and degradation, thereby inhibiting protein phosphatase 6 (PP6) complex activity and focal adhesion assembly during cell migration. The sequence is that of Elongin-C (ELOC) from Bos taurus (Bovine).